Consider the following 83-residue polypeptide: Putative snRNP Sm-like protein (83 aa).

The region spanning 9–81 is the Sm domain; sequence KPMDVLKNAL…VIFVSPSKGD (73 aa).

This sequence belongs to the snRNP Sm proteins family.

The protein is Putative snRNP Sm-like protein of Thermoplasma volcanium (strain ATCC 51530 / DSM 4299 / JCM 9571 / NBRC 15438 / GSS1).